Reading from the N-terminus, the 140-residue chain is Active regulator of SIRT1 (140 aa).

2 disordered regions span residues 1–52 (MSAS…KNKA) and 95–123 (QQVL…EGTV). The span at 108 to 120 (DRPAEKKEKKKPE) shows a compositional bias: basic and acidic residues.

The protein belongs to the AROS family. Part of the small subunit (SSU) processome, composed of more than 70 proteins and the RNA chaperone small nucleolar RNA (snoRNA) U3.

It is found in the nucleus. The protein localises to the nucleolus. Functionally, part of the small subunit (SSU) processome, first precursor of the small eukaryotic ribosomal subunit. During the assembly of the SSU processome in the nucleolus, many ribosome biogenesis factors, an RNA chaperone and ribosomal proteins associate with the nascent pre-rRNA and work in concert to generate RNA folding, modifications, rearrangements and cleavage as well as targeted degradation of pre-ribosomal RNA by the RNA exosome. Acts as a chaperone that specifically mediates the integration of RPS19 in state post-A1. Direct regulator of SIRT1. This Gallus gallus (Chicken) protein is Active regulator of SIRT1 (RPS19BP1).